We begin with the raw amino-acid sequence, 349 residues long: tRNA N6-adenosine threonylcarbamoyltransferase (349 aa).

Residues His-117 and His-121 each coordinate Fe cation. Substrate is bound by residues 139-143, Asp-172, Gly-185, Asp-189, and Asn-278; that span reads QVSGG. Fe cation is bound at residue Asp-310.

It belongs to the KAE1 / TsaD family. Fe(2+) serves as cofactor.

Its subcellular location is the cytoplasm. The catalysed reaction is L-threonylcarbamoyladenylate + adenosine(37) in tRNA = N(6)-L-threonylcarbamoyladenosine(37) in tRNA + AMP + H(+). Functionally, required for the formation of a threonylcarbamoyl group on adenosine at position 37 (t(6)A37) in tRNAs that read codons beginning with adenine. Is involved in the transfer of the threonylcarbamoyl moiety of threonylcarbamoyl-AMP (TC-AMP) to the N6 group of A37, together with TsaE and TsaB. TsaD likely plays a direct catalytic role in this reaction. This is tRNA N6-adenosine threonylcarbamoyltransferase from Lactobacillus acidophilus (strain ATCC 700396 / NCK56 / N2 / NCFM).